The following is a 227-amino-acid chain: Ribonuclease 3 (227 aa).

Positions 4-133 (FEELEKLLDY…LIAAIYLDSD (130 aa)) constitute an RNase III domain. A Mg(2+)-binding site is contributed by Glu46. Asp50 is an active-site residue. Mg(2+) contacts are provided by Asn119 and Glu122. The active site involves Glu122. The DRBM domain occupies 158–226 (DPKTALQEWA…ARELLHKLKL (69 aa)).

It belongs to the ribonuclease III family. Homodimer. Mg(2+) serves as cofactor.

It is found in the cytoplasm. The catalysed reaction is Endonucleolytic cleavage to 5'-phosphomonoester.. In terms of biological role, digests double-stranded RNA. Involved in the processing of primary rRNA transcript to yield the immediate precursors to the large and small rRNAs (23S and 16S). Processes some mRNAs, and tRNAs when they are encoded in the rRNA operon. Processes pre-crRNA and tracrRNA of type II CRISPR loci if present in the organism. The protein is Ribonuclease 3 of Rickettsia bellii (strain OSU 85-389).